The primary structure comprises 92 residues: UPF0223 protein SSP1692 (92 aa).

Belongs to the UPF0223 family.

This is UPF0223 protein SSP1692 from Staphylococcus saprophyticus subsp. saprophyticus (strain ATCC 15305 / DSM 20229 / NCIMB 8711 / NCTC 7292 / S-41).